The chain runs to 604 residues: 3-hydroxy-3-methylglutaryl-coenzyme A reductase 2 (604 aa).

A run of 2 helical transmembrane segments spans residues 47–67 (LPLY…MYFL) and 91–111 (AIVS…IGFV). Positions 112-188 (QTFVARGNND…APLVTPAASE (77 aa)) are linker. A glycan (N-linked (GlcNAc...) asparagine) is linked at Asn-120. The catalytic stretch occupies residues 189-604 (EDEEIIKSVV…STKDVTKASS (416 aa)). Residue Glu-283 is the Charge relay system of the active site. Asn-347 carries an N-linked (GlcNAc...) asparagine glycan. Lys-415 acts as the Charge relay system in catalysis. The N-linked (GlcNAc...) asparagine glycan is linked to Asn-460. Asp-491 acts as the Charge relay system in catalysis. The Proton donor role is filled by His-589. A glycan (N-linked (GlcNAc...) asparagine) is linked at Asn-593.

This sequence belongs to the HMG-CoA reductase family.

The protein localises to the endoplasmic reticulum membrane. The catalysed reaction is (R)-mevalonate + 2 NADP(+) + CoA = (3S)-3-hydroxy-3-methylglutaryl-CoA + 2 NADPH + 2 H(+). It participates in metabolic intermediate biosynthesis; (R)-mevalonate biosynthesis; (R)-mevalonate from acetyl-CoA: step 3/3. Catalyzes the synthesis of mevalonate. The specific precursor of all isoprenoid compounds present in plants. In Capsicum annuum (Capsicum pepper), this protein is 3-hydroxy-3-methylglutaryl-coenzyme A reductase 2 (HMGR2).